Reading from the N-terminus, the 124-residue chain is Mitochondrial import inner membrane translocase subunit TIM16 (124 aa).

The interval 58–109 (EAQQILNISKLSPEEVQNYEHLFKVNDKSVGDSFYLQSKVVRAKERLDEELQ) is J-like. S69 carries the post-translational modification Phosphoserine.

Belongs to the TIM16/PAM16 family. Probable component of the PAM complex at least composed of a mitochondrial HSP70 protein, GRPEL1 or GRPEL2, TIMM44, TIMM16/PAM16 and TIMM14/DNAJC19. Interacts with DNAJC19. Directly interacts with DNAJC15; this interaction counteracts DNAJC15-dependent stimulation of HSPA9 ATPase activity. Associates with the TIM23 complex.

It is found in the mitochondrion inner membrane. Its function is as follows. Regulates ATP-dependent protein translocation into the mitochondrial matrix. Inhibits DNAJC19 stimulation of HSPA9/Mortalin ATPase activity. The sequence is that of Mitochondrial import inner membrane translocase subunit TIM16 (Magmas-ps1) from Rattus norvegicus (Rat).